The chain runs to 185 residues: Somatotropin (185 aa).

An intrachain disulfide couples Cys52 to Cys158. Glu167 is a binding site for Zn(2+). A disulfide bond links Cys175 and Cys183.

This sequence belongs to the somatotropin/prolactin family.

It localises to the secreted. Functionally, growth hormone plays an important role in growth control and is involved in the regulation of several anabolic processes. Implicated as an osmoregulatory substance important for seawater adaptation. In Katsuwonus pelamis (Skipjack tuna), this protein is Somatotropin (gh).